The primary structure comprises 92 residues: UPF0223 protein SPy_1248/M5005_Spy0958 (92 aa).

Belongs to the UPF0223 family.

This Streptococcus pyogenes serotype M1 protein is UPF0223 protein SPy_1248/M5005_Spy0958.